We begin with the raw amino-acid sequence, 182 residues long: Nuclear cap-binding protein subunit 2 (182 aa).

Residues Y13, Y35, 104–108, 115–119, and 125–126 contribute to the mRNA site; these read RADLD, RQYGR, and QV. The 79-residue stretch at 32 to 110 folds into the RRM domain; it reads NCVYVGNLSF…RIIRADLDHG (79 aa). Positions 114 to 182 are disordered; it reads GRQYGRGASG…NPRYNRWKKN (69 aa). A compositionally biased stretch (basic and acidic residues) spans 126–136; sequence VRDEMREEFDP. The span at 145–175 shows a compositional bias: polar residues; sequence RQPTSSRQLANYSGISSAPLGSSLELQSNPR.

The protein belongs to the RRM NCBP2 family. In terms of assembly, component of the nuclear cap-binding complex (CBC), a heterodimer composed of cbc1 and cbc2 that interacts with capped RNAs.

It is found in the cytoplasm. The protein resides in the perinuclear region. Its subcellular location is the nucleus. Its function is as follows. Component of the CBC complex, which binds co-transcriptionally to the 5' cap of pre-mRNAs and is involved in maturation, export and degradation of nuclear mRNAs. In Schizosaccharomyces pombe (strain 972 / ATCC 24843) (Fission yeast), this protein is Nuclear cap-binding protein subunit 2 (cbc2).